We begin with the raw amino-acid sequence, 128 residues long: SH2 domain-containing protein 1A (128 aa).

Positions 6–102 (VYHGKISRET…GIVIPLQYPV (97 aa)) constitute an SH2 domain. Residues 67-92 (ETAPGVHKRFFRKIKNLISAFQKPDQ) form an interaction with FYN SH3 domain region. N6-acetyllysine is present on lysine 89. The interval 104–128 (KKPSARSTQGATGRRDDPDVFLKTP) is disordered. Over residues 116–128 (GRRDDPDVFLKTP) the composition is skewed to basic and acidic residues.

Interacts with CD84, CD244, LY9, SLAMF1 and FYN. Interacts with NTRK1, NTRK2 and NTRK3.

Its subcellular location is the cytoplasm. In terms of biological role, cytoplasmic adapter regulating receptors of the signaling lymphocytic activation molecule (SLAM) family such as SLAMF1, CD244, LY9, CD84, SLAMF6 and SLAMF7. In SLAM signaling seems to cooperate with SH2D1B/EAT-2. Initially it has been proposed that association with SLAMF1 prevents SLAMF1 binding to inhibitory effectors including INPP5D/SHIP1 and PTPN11/SHP-2. However, by simultaneous interactions, recruits FYN which subsequently phosphorylates and activates SLAMF1. Positively regulates CD244/2B4- and CD84-mediated natural killer (NK) cell functions. Can also promote CD48-, SLAMF6 -, LY9-, and SLAMF7-mediated NK cell activation. In the context of NK cell-mediated cytotoxicity enhances conjugate formation with target cells. May also regulate the activity of the neurotrophin receptors NTRK1, NTRK2 and NTRK3. The polypeptide is SH2 domain-containing protein 1A (SH2D1A) (Bos taurus (Bovine)).